A 61-amino-acid chain; its full sequence is MDPNCSCSTGGSCSCAGSCTCKACRCTSCKKSCCSCCPAGCARCAQGCICKGASDKCSCCA.

The tract at residues 1-29 (MDPNCSCSTGGSCSCAGSCTCKACRCTSC) is beta. Positions 5, 7, 13, 15, 19, 21, 24, 26, 29, 33, 34, 36, 37, 41, 44, 48, 50, 57, 59, and 60 each coordinate a divalent metal cation. The interval 30–61 (KKSCCSCCPAGCARCAQGCICKGASDKCSCCA) is alpha.

Belongs to the metallothionein superfamily. Type 1 family. In terms of assembly, monomer.

Functionally, metallothioneins have a high content of cysteine residues that bind various heavy metals; these proteins are transcriptionally regulated by both heavy metals and glucocorticoids. The polypeptide is Metallothionein-1C (MT1C) (Sus scrofa (Pig)).